The sequence spans 118 residues: MTSYTFSRELRLLTPAQFKSVFSNPIKASSAEITLLAIPNTEQHPRMGLTVAKRFVKRANQRNRIKRVIRDSFRLNQHDIPHLDIVVLVRNGVMEMENAEINKLIEKLWRKLSRRYNG.

The protein belongs to the RnpA family. Consists of a catalytic RNA component (M1 or rnpB) and a protein subunit.

The catalysed reaction is Endonucleolytic cleavage of RNA, removing 5'-extranucleotides from tRNA precursor.. In terms of biological role, RNaseP catalyzes the removal of the 5'-leader sequence from pre-tRNA to produce the mature 5'-terminus. It can also cleave other RNA substrates such as 4.5S RNA. The protein component plays an auxiliary but essential role in vivo by binding to the 5'-leader sequence and broadening the substrate specificity of the ribozyme. The protein is Ribonuclease P protein component of Shewanella baltica (strain OS155 / ATCC BAA-1091).